A 124-amino-acid polypeptide reads, in one-letter code: Small ribosomal subunit protein uS12cy (124 aa).

This sequence belongs to the universal ribosomal protein uS12 family. Part of the 30S ribosomal subunit.

The protein resides in the plastid. Its subcellular location is the chloroplast. In terms of biological role, with S4 and S5 plays an important role in translational accuracy. Located at the interface of the 30S and 50S subunits. This chain is Small ribosomal subunit protein uS12cy (rps12-B), found in Olimarabidopsis pumila (Dwarf rocket).